Reading from the N-terminus, the 175-residue chain is Probable DNA replication complex GINS protein PSF2 (175 aa).

The protein belongs to the GINS2/PSF2 family. As to quaternary structure, component of the GINS complex which is a heterotetramer of SLD5, PSF1, PSF2 and PSF3.

Its subcellular location is the nucleus. In terms of biological role, the GINS complex plays an essential role in the initiation of DNA replication. In Encephalitozoon cuniculi (strain GB-M1) (Microsporidian parasite), this protein is Probable DNA replication complex GINS protein PSF2.